A 398-amino-acid polypeptide reads, in one-letter code: Elongation factor Tu (398 aa).

A tr-type G domain is found at 10-207 (KPHVNIGTIG…TADEYIPEPE (198 aa)). Positions 19 to 26 (GHVDHGKT) are G1. 19–26 (GHVDHGKT) contributes to the GTP binding site. T26 serves as a coordination point for Mg(2+). The G2 stretch occupies residues 63 to 67 (GITIN). The tract at residues 84-87 (DAPG) is G3. GTP is bound by residues 84 to 88 (DAPGH) and 139 to 142 (NKID). The segment at 139–142 (NKID) is G4. The interval 177 to 179 (SAL) is G5.

This sequence belongs to the TRAFAC class translation factor GTPase superfamily. Classic translation factor GTPase family. EF-Tu/EF-1A subfamily. As to quaternary structure, monomer.

The protein localises to the cytoplasm. The enzyme catalyses GTP + H2O = GDP + phosphate + H(+). GTP hydrolase that promotes the GTP-dependent binding of aminoacyl-tRNA to the A-site of ribosomes during protein biosynthesis. In Streptococcus uberis (strain ATCC BAA-854 / 0140J), this protein is Elongation factor Tu.